The sequence spans 45 residues: Cytochrome b559 subunit beta (45 aa).

A helical transmembrane segment spans residues 20–36 (WLAVHTLGVPTVFFLGA). Position 24 (His-24) interacts with heme.

The protein belongs to the PsbE/PsbF family. In terms of assembly, heterodimer of an alpha subunit and a beta subunit. PSII is composed of 1 copy each of membrane proteins PsbA, PsbB, PsbC, PsbD, PsbE, PsbF, PsbH, PsbI, PsbJ, PsbK, PsbL, PsbM, PsbT, PsbX, PsbY, PsbZ, Psb30/Ycf12, peripheral proteins PsbO, CyanoQ (PsbQ), PsbU, PsbV and a large number of cofactors. It forms dimeric complexes. Heme b is required as a cofactor.

It is found in the cellular thylakoid membrane. Functionally, this b-type cytochrome is tightly associated with the reaction center of photosystem II (PSII). PSII is a light-driven water:plastoquinone oxidoreductase that uses light energy to abstract electrons from H(2)O, generating O(2) and a proton gradient subsequently used for ATP formation. It consists of a core antenna complex that captures photons, and an electron transfer chain that converts photonic excitation into a charge separation. The protein is Cytochrome b559 subunit beta of Nostoc punctiforme (strain ATCC 29133 / PCC 73102).